The primary structure comprises 612 residues: Dihydroxy-acid dehydratase (612 aa).

Aspartate 81 lines the Mg(2+) pocket. [2Fe-2S] cluster is bound at residue cysteine 122. 2 residues coordinate Mg(2+): aspartate 123 and lysine 124. Lysine 124 is modified (N6-carboxylysine). Residue cysteine 195 coordinates [2Fe-2S] cluster. Glutamate 491 provides a ligand contact to Mg(2+). Serine 517 (proton acceptor) is an active-site residue.

The protein belongs to the IlvD/Edd family. As to quaternary structure, homodimer. [2Fe-2S] cluster is required as a cofactor. It depends on Mg(2+) as a cofactor.

It carries out the reaction (2R)-2,3-dihydroxy-3-methylbutanoate = 3-methyl-2-oxobutanoate + H2O. The enzyme catalyses (2R,3R)-2,3-dihydroxy-3-methylpentanoate = (S)-3-methyl-2-oxopentanoate + H2O. The protein operates within amino-acid biosynthesis; L-isoleucine biosynthesis; L-isoleucine from 2-oxobutanoate: step 3/4. Its pathway is amino-acid biosynthesis; L-valine biosynthesis; L-valine from pyruvate: step 3/4. Functions in the biosynthesis of branched-chain amino acids. Catalyzes the dehydration of (2R,3R)-2,3-dihydroxy-3-methylpentanoate (2,3-dihydroxy-3-methylvalerate) into 2-oxo-3-methylpentanoate (2-oxo-3-methylvalerate) and of (2R)-2,3-dihydroxy-3-methylbutanoate (2,3-dihydroxyisovalerate) into 2-oxo-3-methylbutanoate (2-oxoisovalerate), the penultimate precursor to L-isoleucine and L-valine, respectively. This Haemophilus influenzae (strain 86-028NP) protein is Dihydroxy-acid dehydratase.